We begin with the raw amino-acid sequence, 155 residues long: Small ribosomal subunit protein uS7c (155 aa).

Belongs to the universal ribosomal protein uS7 family. In terms of assembly, part of the 30S ribosomal subunit.

The protein resides in the plastid. Its subcellular location is the chloroplast. Functionally, one of the primary rRNA binding proteins, it binds directly to 16S rRNA where it nucleates assembly of the head domain of the 30S subunit. In Pinus thunbergii (Japanese black pine), this protein is Small ribosomal subunit protein uS7c (rps7).